A 358-amino-acid polypeptide reads, in one-letter code: Protein-arginine kinase (358 aa).

In terms of domain architecture, Phosphagen kinase C-terminal spans 24-255 (IVLSSRIRLA…KQLIRQERVA (232 aa)). Residues 27 to 31 (SSRIR), H92, R126, 177 to 181 (RASVM), and 208 to 213 (RGIYGE) each bind ATP. The short motif at 338–343 (RDERRA) is the RDXXRA motif of the pArg binding pocket involved in allosteric regulation element.

It belongs to the ATP:guanido phosphotransferase family.

It carries out the reaction L-arginyl-[protein] + ATP = N(omega)-phospho-L-arginyl-[protein] + ADP + H(+). With respect to regulation, appears to be allosterically activated by the binding of pArg-containing polypeptides to the pArg-binding pocket localized in the C-terminal domain of McsB. Catalyzes the specific phosphorylation of arginine residues in a large number of proteins. Is part of the bacterial stress response system. Protein arginine phosphorylation has a physiologically important role and is involved in the regulation of many critical cellular processes, such as protein homeostasis, motility, competence, and stringent and stress responses, by regulating gene expression and protein activity. This is Protein-arginine kinase from Shouchella clausii (strain KSM-K16) (Alkalihalobacillus clausii).